Consider the following 256-residue polypeptide: Ubiquinone/menaquinone biosynthesis C-methyltransferase UbiE (256 aa).

Residues Thr79, Asp100, and Asp128–Ala129 contribute to the S-adenosyl-L-methionine site.

The protein belongs to the class I-like SAM-binding methyltransferase superfamily. MenG/UbiE family.

It carries out the reaction a 2-demethylmenaquinol + S-adenosyl-L-methionine = a menaquinol + S-adenosyl-L-homocysteine + H(+). The enzyme catalyses a 2-methoxy-6-(all-trans-polyprenyl)benzene-1,4-diol + S-adenosyl-L-methionine = a 5-methoxy-2-methyl-3-(all-trans-polyprenyl)benzene-1,4-diol + S-adenosyl-L-homocysteine + H(+). It functions in the pathway quinol/quinone metabolism; menaquinone biosynthesis; menaquinol from 1,4-dihydroxy-2-naphthoate: step 2/2. The protein operates within cofactor biosynthesis; ubiquinone biosynthesis. Its function is as follows. Methyltransferase required for the conversion of demethylmenaquinol (DMKH2) to menaquinol (MKH2) and the conversion of 2-polyprenyl-6-methoxy-1,4-benzoquinol (DDMQH2) to 2-polyprenyl-3-methyl-6-methoxy-1,4-benzoquinol (DMQH2). The polypeptide is Ubiquinone/menaquinone biosynthesis C-methyltransferase UbiE (Pseudomonas syringae pv. tomato (strain ATCC BAA-871 / DC3000)).